A 280-amino-acid polypeptide reads, in one-letter code: Acetylglutamate kinase (280 aa).

Residues 57–58 (GG), Arg79, and Asn174 each bind substrate.

It belongs to the acetylglutamate kinase family. ArgB subfamily.

It is found in the cytoplasm. It catalyses the reaction N-acetyl-L-glutamate + ATP = N-acetyl-L-glutamyl 5-phosphate + ADP. It participates in amino-acid biosynthesis; L-arginine biosynthesis; N(2)-acetyl-L-ornithine from L-glutamate: step 2/4. In terms of biological role, catalyzes the ATP-dependent phosphorylation of N-acetyl-L-glutamate. The polypeptide is Acetylglutamate kinase (Helicobacter hepaticus (strain ATCC 51449 / 3B1)).